The sequence spans 198 residues: Nucleoid occlusion factor SlmA (198 aa).

The region spanning 9–70 (RNRREEILQA…SLIEFIEDSL (62 aa)) is the HTH tetR-type domain. A DNA-binding region (H-T-H motif) is located at residues 33–52 (TTAKLAANVGVSEAALYRHF). Residues 119-144 (DRLQGRINQLFERIEVQLRQVLREKK) are a coiled coil.

The protein belongs to the nucleoid occlusion factor SlmA family. As to quaternary structure, homodimer. Interacts with FtsZ.

The protein localises to the cytoplasm. It localises to the nucleoid. In terms of biological role, required for nucleoid occlusion (NO) phenomenon, which prevents Z-ring formation and cell division over the nucleoid. Acts as a DNA-associated cell division inhibitor that binds simultaneously chromosomal DNA and FtsZ, and disrupts the assembly of FtsZ polymers. SlmA-DNA-binding sequences (SBS) are dispersed on non-Ter regions of the chromosome, preventing FtsZ polymerization at these regions. The protein is Nucleoid occlusion factor SlmA of Yersinia enterocolitica serotype O:8 / biotype 1B (strain NCTC 13174 / 8081).